The sequence spans 137 residues: Transcription antitermination protein NusB (137 aa).

The protein belongs to the NusB family.

In terms of biological role, involved in transcription antitermination. Required for transcription of ribosomal RNA (rRNA) genes. Binds specifically to the boxA antiterminator sequence of the ribosomal RNA (rrn) operons. This chain is Transcription antitermination protein NusB, found in Aeromonas salmonicida (strain A449).